Here is a 225-residue protein sequence, read N- to C-terminus: UPF0758 protein Ping_0056 (225 aa).

One can recognise an MPN domain in the interval 103-225 (ALTSAAQTKA…CTSFAENGWI (123 aa)). Zn(2+) contacts are provided by His174, His176, and Asp187. The JAMM motif signature appears at 174–187 (HNHPSGDPSASEAD).

Belongs to the UPF0758 family.

This Psychromonas ingrahamii (strain DSM 17664 / CCUG 51855 / 37) protein is UPF0758 protein Ping_0056.